Reading from the N-terminus, the 101-residue chain is Protein SSXA1 (101 aa).

Residues 19–83 (ETCQAFEDIS…ERVTKSVLSD (65 aa)) form the KRAB-related domain. A disordered region spans residues 73–101 (KERVTKSVLSDSDEVSSHESQDKRKNPVV). A compositionally biased stretch (basic and acidic residues) spans 87 to 101 (VSSHESQDKRKNPVV).

It belongs to the SSX family. In terms of tissue distribution, specifically expressed in testis (at protein level). Not detected in other tissues tested (at protein level).

The protein resides in the nucleus. Functionally, could act as a modulator of transcription. The chain is Protein SSXA1 from Mus musculus (Mouse).